We begin with the raw amino-acid sequence, 144 residues long: uncharacterized protein (144 aa).

4 helical membrane-spanning segments follow: residues 16–36 (FLIF…GAIF), 48–68 (GFIV…ALII), 87–107 (LLPE…LVLL), and 120–140 (VMSL…WYFG).

The protein localises to the cell membrane. This is an uncharacterized protein from Methanocaldococcus jannaschii (strain ATCC 43067 / DSM 2661 / JAL-1 / JCM 10045 / NBRC 100440) (Methanococcus jannaschii).